Reading from the N-terminus, the 93-residue chain is MPRSLKKGPFVDEHLLKKVDVQNEKNTKQVIKTWSRRSTIIPDFIGHTFAVHDGRKHVPVFVTESMVGHKLGEFAPTRTFKGHIKDDRKSKRR.

It belongs to the universal ribosomal protein uS19 family.

Functionally, protein S19 forms a complex with S13 that binds strongly to the 16S ribosomal RNA. In Mycobacterium tuberculosis (strain ATCC 25177 / H37Ra), this protein is Small ribosomal subunit protein uS19.